The sequence spans 59 residues: Small ribosomal subunit protein bS21 (59 aa).

Residues 35–59 (REHYEKPSVKKKKKSEAAKRKKRNF) are disordered. Basic residues predominate over residues 43–59 (VKKKKKSEAAKRKKRNF).

This sequence belongs to the bacterial ribosomal protein bS21 family.

This chain is Small ribosomal subunit protein bS21, found in Finegoldia magna (strain ATCC 29328 / DSM 20472 / WAL 2508) (Peptostreptococcus magnus).